We begin with the raw amino-acid sequence, 423 residues long: Phosphoribosylamine--glycine ligase (423 aa).

One can recognise an ATP-grasp domain in the interval 107-312 (KDLCARYGIP…LLPLLYAAAT (206 aa)). 133–193 (IREEGAPIVI…EAYLDGEEAS (61 aa)) provides a ligand contact to ATP. Positions 282 and 284 each coordinate Mg(2+).

The protein belongs to the GARS family. The cofactor is Mg(2+). Mn(2+) is required as a cofactor.

The catalysed reaction is 5-phospho-beta-D-ribosylamine + glycine + ATP = N(1)-(5-phospho-beta-D-ribosyl)glycinamide + ADP + phosphate + H(+). It participates in purine metabolism; IMP biosynthesis via de novo pathway; N(1)-(5-phospho-D-ribosyl)glycinamide from 5-phospho-alpha-D-ribose 1-diphosphate: step 2/2. This Rhizobium meliloti (strain 1021) (Ensifer meliloti) protein is Phosphoribosylamine--glycine ligase.